Consider the following 361-residue polypeptide: Mitogen-activated protein kinase 14 (361 aa).

A Protein kinase domain is found at 25-309 (YQNLTPVGSG…AAEALAHSYF (285 aa)). Residues 31–39 (VGSGAYGSV) and Lys-54 each bind ATP. The Proton acceptor role is filled by Asp-151. Phosphothreonine is present on Thr-181. The TXY signature appears at 181-183 (TGY). Tyr-183 carries the post-translational modification Phosphotyrosine.

It belongs to the protein kinase superfamily. CMGC Ser/Thr protein kinase family. MAP kinase subfamily. Requires Mg(2+) as cofactor. Post-translationally, dually phosphorylated on Thr-181 and Tyr-183, which activates the enzyme.

The enzyme catalyses L-seryl-[protein] + ATP = O-phospho-L-seryl-[protein] + ADP + H(+). The catalysed reaction is L-threonyl-[protein] + ATP = O-phospho-L-threonyl-[protein] + ADP + H(+). With respect to regulation, activated by tyrosine and threonine phosphorylation. Its function is as follows. Serine/threonine kinase which acts as an essential component of the MAP kinase signal transduction pathway. mapk14a is one of the four p38 MAPKs which play an important role in the cascades of cellular responses evoked by extracellular stimuli such as pro-inflammatory cytokines or physical stress leading to direct activation of transcription factors. Accordingly, p38 MAPKs phosphorylate a broad range of proteins and it has been estimated that they may have approximately 200 to 300 substrates each. Some of the targets are downstream kinases which are activated through phosphorylation and further phosphorylate additional targets. MPK2 is activated by upstream MAPKK/MAPKKK and stimulates MAPKAP kinase 2 to phosphorylate small heat shock proteins. Does not phosphorylate myelin basic protein or MAPKAP kinase 1. The sequence is that of Mitogen-activated protein kinase 14 (mapk14) from Xenopus laevis (African clawed frog).